We begin with the raw amino-acid sequence, 155 residues long: Small ribosomal subunit protein uS7cz/uS7cy (155 aa).

The protein belongs to the universal ribosomal protein uS7 family. As to quaternary structure, part of the 30S ribosomal subunit.

The protein resides in the plastid. It localises to the chloroplast. In terms of biological role, one of the primary rRNA binding proteins, it binds directly to 16S rRNA where it nucleates assembly of the head domain of the 30S subunit. This chain is Small ribosomal subunit protein uS7cz/uS7cy (rps7-A), found in Piper cenocladum (Ant piper).